We begin with the raw amino-acid sequence, 475 residues long: Protein EARLY HEADING DATE 2 (475 aa).

Residues 1–16 (MLLSDLSSDQEATGSN) show a composition bias toward polar residues. Residues 1-26 (MLLSDLSSDQEATGSNSHGGGGGDRM) are disordered. 2 consecutive C2H2-type zinc fingers follow at residues 105 to 127 (FVCE…RRGH) and 155 to 185 (YVCP…SRKH). 2 short sequence motifs (nuclear localization signal) span residues 123 to 130 (HRRGHNLP) and 177 to 184 (IKKHFSRK). The segment at 190 to 213 (WRCERCGKRYAVHSDWKAHVKNCG) adopts a C2H2-type 2; degenerate zinc-finger fold. Residues Cys-192, Cys-195, His-208, Cys-212, Cys-219, Cys-221, His-234, and Cys-238 each coordinate Zn(2+). A CCHC-type 2; atypical zinc finger spans residues 217 to 240 (YRCDCGILFSRKDSLLTHRAFCDA). The interval 227–239 (RKDSLLTHRAFCD) is SHR-binding.

As to expression, mostly expressed in developing leaves (more in sheaths than in blades, especially in the outer epidermal cell of immature leaves and in the region immediately beneath the meristem where internodes are visible) and panicles, and, at very low levels, around the shoot apex and in roots.

The protein localises to the nucleus. In terms of biological role, transcription activator that acts as a flowering master switch in both long and short days, independently of the circadian clock. Promotes flowering upstream of HD1 by up-regulating FTL1, FTL4, FTL5, FTL6, EHD1, HD3A and RFT1. Seems to repress FTL11 expression. May recognize the consensus motif 5'-TTTGTCGTAAT-3' in target gene promoters. In Oryza sativa subsp. japonica (Rice), this protein is Protein EARLY HEADING DATE 2.